Here is a 275-residue protein sequence, read N- to C-terminus: NH(3)-dependent NAD(+) synthetase (275 aa).

Glycine 46–serine 53 serves as a coordination point for ATP. Aspartate 52 serves as a coordination point for Mg(2+). Deamido-NAD(+) is bound at residue arginine 140. Threonine 160 contributes to the ATP binding site. Glutamate 165 contributes to the Mg(2+) binding site. Deamido-NAD(+)-binding residues include lysine 173 and aspartate 180. 2 residues coordinate ATP: lysine 189 and threonine 211. Histidine 260–lysine 261 is a binding site for deamido-NAD(+).

The protein belongs to the NAD synthetase family. Homodimer.

It carries out the reaction deamido-NAD(+) + NH4(+) + ATP = AMP + diphosphate + NAD(+) + H(+). The protein operates within cofactor biosynthesis; NAD(+) biosynthesis; NAD(+) from deamido-NAD(+) (ammonia route): step 1/1. In terms of biological role, catalyzes the ATP-dependent amidation of deamido-NAD to form NAD. Uses ammonia as a nitrogen source. In Shigella dysenteriae serotype 1 (strain Sd197), this protein is NH(3)-dependent NAD(+) synthetase.